The following is a 374-amino-acid chain: Putative zinc finger MYND domain-containing protein R331 (374 aa).

Zn(2+) is bound by residues cysteine 328, cysteine 331, cysteine 341, cysteine 344, cysteine 350, cysteine 354, histidine 362, and cysteine 366. Residues cysteine 328–cysteine 366 form an MYND-type zinc finger.

The polypeptide is Putative zinc finger MYND domain-containing protein R331 (Acanthamoeba polyphaga (Amoeba)).